A 357-amino-acid chain; its full sequence is Cobalt-precorrin-5B C(1)-methyltransferase (357 aa).

This sequence belongs to the CbiD family.

It catalyses the reaction Co-precorrin-5B + S-adenosyl-L-methionine = Co-precorrin-6A + S-adenosyl-L-homocysteine. It functions in the pathway cofactor biosynthesis; adenosylcobalamin biosynthesis; cob(II)yrinate a,c-diamide from sirohydrochlorin (anaerobic route): step 6/10. Catalyzes the methylation of C-1 in cobalt-precorrin-5B to form cobalt-precorrin-6A. The chain is Cobalt-precorrin-5B C(1)-methyltransferase from Gloeobacter violaceus (strain ATCC 29082 / PCC 7421).